A 65-amino-acid polypeptide reads, in one-letter code: Large ribosomal subunit protein bL35 (65 aa).

This sequence belongs to the bacterial ribosomal protein bL35 family.

The sequence is that of Large ribosomal subunit protein bL35 from Nitrosomonas eutropha (strain DSM 101675 / C91 / Nm57).